Reading from the N-terminus, the 190-residue chain is Secreted isochorismatase effector Isc1 (190 aa).

Residues D26, K100, and C133 contribute to the active site.

This sequence belongs to the isochorismatase family.

It localises to the secreted. Its subcellular location is the host cytoplasm. The protein localises to the host nucleus. It catalyses the reaction isochorismate + H2O = (2S,3S)-2,3-dihydroxy-2,3-dihydrobenzoate + pyruvate. Secreted isochorismatase required for full virulence of V.dahliae. Suppresses salicylate-mediated innate immunity of the host by disrupting the plant salicylate metabolism pathway via hydrolysis of its isochorismate precursor. The sequence is that of Secreted isochorismatase effector Isc1 from Verticillium dahliae (strain VdLs.17 / ATCC MYA-4575 / FGSC 10137) (Verticillium wilt).